A 335-amino-acid polypeptide reads, in one-letter code: Holliday junction branch migration complex subunit RuvB (335 aa).

The interval 4 to 184 (ADRIISTSAK…FGIVQRLEFY (181 aa)) is large ATPase domain (RuvB-L). Residues I23, R24, G65, K68, T69, T70, 131–133 (EDY), R174, Y184, and R221 each bind ATP. A Mg(2+)-binding site is contributed by T69. The segment at 185-255 (AVEDLTSIVA…SAKAALLMLD (71 aa)) is small ATPAse domain (RuvB-S). Positions 258 to 335 (DAGFDYLDRK…RYFGLEKLTE (78 aa)) are head domain (RuvB-H). The DNA site is built by R294, R313, and R318.

It belongs to the RuvB family. Homohexamer. Forms an RuvA(8)-RuvB(12)-Holliday junction (HJ) complex. HJ DNA is sandwiched between 2 RuvA tetramers; dsDNA enters through RuvA and exits via RuvB. An RuvB hexamer assembles on each DNA strand where it exits the tetramer. Each RuvB hexamer is contacted by two RuvA subunits (via domain III) on 2 adjacent RuvB subunits; this complex drives branch migration. In the full resolvosome a probable DNA-RuvA(4)-RuvB(12)-RuvC(2) complex forms which resolves the HJ.

The protein localises to the cytoplasm. The enzyme catalyses ATP + H2O = ADP + phosphate + H(+). In terms of biological role, the RuvA-RuvB-RuvC complex processes Holliday junction (HJ) DNA during genetic recombination and DNA repair, while the RuvA-RuvB complex plays an important role in the rescue of blocked DNA replication forks via replication fork reversal (RFR). RuvA specifically binds to HJ cruciform DNA, conferring on it an open structure. The RuvB hexamer acts as an ATP-dependent pump, pulling dsDNA into and through the RuvAB complex. RuvB forms 2 homohexamers on either side of HJ DNA bound by 1 or 2 RuvA tetramers; 4 subunits per hexamer contact DNA at a time. Coordinated motions by a converter formed by DNA-disengaged RuvB subunits stimulates ATP hydrolysis and nucleotide exchange. Immobilization of the converter enables RuvB to convert the ATP-contained energy into a lever motion, pulling 2 nucleotides of DNA out of the RuvA tetramer per ATP hydrolyzed, thus driving DNA branch migration. The RuvB motors rotate together with the DNA substrate, which together with the progressing nucleotide cycle form the mechanistic basis for DNA recombination by continuous HJ branch migration. Branch migration allows RuvC to scan DNA until it finds its consensus sequence, where it cleaves and resolves cruciform DNA. The chain is Holliday junction branch migration complex subunit RuvB from Pasteurella multocida (strain Pm70).